Consider the following 615-residue polypeptide: 1-deoxy-D-xylulose-5-phosphate synthase (615 aa).

Thiamine diphosphate is bound by residues His-72 and 111 to 113 (GHS). Asp-142 provides a ligand contact to Mg(2+). Thiamine diphosphate is bound by residues 143–144 (GA), Asn-171, Tyr-278, and Glu-360. Asn-171 is a binding site for Mg(2+).

The protein belongs to the transketolase family. DXPS subfamily. As to quaternary structure, homodimer. The cofactor is Mg(2+). Thiamine diphosphate serves as cofactor.

It catalyses the reaction D-glyceraldehyde 3-phosphate + pyruvate + H(+) = 1-deoxy-D-xylulose 5-phosphate + CO2. The protein operates within metabolic intermediate biosynthesis; 1-deoxy-D-xylulose 5-phosphate biosynthesis; 1-deoxy-D-xylulose 5-phosphate from D-glyceraldehyde 3-phosphate and pyruvate: step 1/1. In terms of biological role, catalyzes the acyloin condensation reaction between C atoms 2 and 3 of pyruvate and glyceraldehyde 3-phosphate to yield 1-deoxy-D-xylulose-5-phosphate (DXP). This Campylobacter jejuni (strain RM1221) protein is 1-deoxy-D-xylulose-5-phosphate synthase.